The primary structure comprises 529 residues: Delayed-rectifier potassium channel regulatory subunit KCNS1 (529 aa).

Residues 1 to 217 (MLMLLVRGTR…LTMENPGYSL (217 aa)) lie on the Cytoplasmic side of the membrane. The helical transmembrane segment at 218-239 (PSKLFSCVSISVVLASIAAMCI) threads the bilayer. Residues 240–270 (HSLPEYQAREAAAAVAAVAAGRSPEGVRDDP) lie on the Extracellular side of the membrane. The chain crosses the membrane as a helical span at residues 271-293 (VLRRLEYFCIAWFSFEVSSRLLL). Topologically, residues 294-304 (APSTRNFFCHP) are cytoplasmic. The chain crosses the membrane as a helical span at residues 305-322 (LNLIDIVSVLPFYLTLLA). Residues 323-340 (GVALGDQGGTGGKELGHL) are Extracellular-facing. A helical; Voltage-sensor membrane pass occupies residues 341–361 (GKVVQVFRLMRIFRVLKLARH). The Cytoplasmic segment spans residues 362–376 (STGLRSLGATLKHSY). A helical membrane pass occupies residues 377-398 (REVGILLLYLAVGVSVFSGVAY). Residues 399–411 (TAEKEEDVGFNTI) lie on the Extracellular side of the membrane. The segment at residues 412–423 (PACWWWGTVSMT) is an intramembrane region (helical). Positions 424–429 (TVGYGD) match the Selectivity filter motif. The stretch at 424-431 (TVGYGDVV) is an intramembrane region. Over 432 to 438 (PVTVAGK) the chain is Extracellular. A helical membrane pass occupies residues 439-467 (LAASGCILGGILVVALPITIIFNKFSHFY). The Cytoplasmic portion of the chain corresponds to 468 to 529 (RRQKALEAAV…PSEPPHPQMY (62 aa)). Positions 500-529 (LETSREISQEGRSADLETQAPSEPPHPQMY) are disordered. Residues 502–514 (TSREISQEGRSAD) show a composition bias toward basic and acidic residues.

This sequence belongs to the potassium channel family. S (TC 1.A.1.2) subfamily. Kv9.1/KCNS1 sub-subfamily. Heterotetramer with KCNB1. Heterotetramer with KCNB2. Does not form homomultimers.

It is found in the cell membrane. In terms of biological role, potassium channel regulatory subunit that modulate the delayed rectifier voltage-gated potassium channel activity of KCNB1 and KCNB2 by altering their kinetics, expression levels, and shifting the half-inactivation potential to more polarized values. While it does not form functional channels on its own, it can form functional heterotetrameric channels with KCNB1 and KCNB2. Each regulatory subunit has unique regulatory properties that can lead to extensive inhibition, significant changes in kinetics, and/or substantial shifts in the voltage dependencies of the inactivation process. The chain is Delayed-rectifier potassium channel regulatory subunit KCNS1 from Colobus guereza (Mantled guereza).